We begin with the raw amino-acid sequence, 314 residues long: tRNA pseudouridine synthase B (314 aa).

His43 contributes to the substrate binding site. Asp48 acts as the Nucleophile in catalysis. 3 residues coordinate substrate: Tyr76, Tyr179, and Leu200.

It belongs to the pseudouridine synthase TruB family. Type 1 subfamily.

The catalysed reaction is uridine(55) in tRNA = pseudouridine(55) in tRNA. Responsible for synthesis of pseudouridine from uracil-55 in the psi GC loop of transfer RNAs. The protein is tRNA pseudouridine synthase B of Enterobacter sp. (strain 638).